The chain runs to 189 residues: NADH-quinone oxidoreductase subunit B (189 aa).

[4Fe-4S] cluster-binding residues include Cys-39, Cys-40, Cys-104, and Cys-135.

It belongs to the complex I 20 kDa subunit family. NDH-1 is composed of 14 different subunits. Subunits NuoB, C, D, E, F, and G constitute the peripheral sector of the complex. [4Fe-4S] cluster is required as a cofactor.

Its subcellular location is the cell inner membrane. It carries out the reaction a quinone + NADH + 5 H(+)(in) = a quinol + NAD(+) + 4 H(+)(out). In terms of biological role, NDH-1 shuttles electrons from NADH, via FMN and iron-sulfur (Fe-S) centers, to quinones in the respiratory chain. The immediate electron acceptor for the enzyme in this species is believed to be a menaquinone. Couples the redox reaction to proton translocation (for every two electrons transferred, four hydrogen ions are translocated across the cytoplasmic membrane), and thus conserves the redox energy in a proton gradient. This chain is NADH-quinone oxidoreductase subunit B, found in Chlorobaculum tepidum (strain ATCC 49652 / DSM 12025 / NBRC 103806 / TLS) (Chlorobium tepidum).